A 1001-amino-acid polypeptide reads, in one-letter code: Phosphoenolpyruvate carboxylase (1001 aa).

Active-site residues include H189 and K642.

This sequence belongs to the PEPCase type 1 family. Mg(2+) serves as cofactor.

The enzyme catalyses oxaloacetate + phosphate = phosphoenolpyruvate + hydrogencarbonate. Its function is as follows. Forms oxaloacetate, a four-carbon dicarboxylic acid source for the tricarboxylic acid cycle. The chain is Phosphoenolpyruvate carboxylase from Prochlorococcus marinus (strain SARG / CCMP1375 / SS120).